Here is a 151-residue protein sequence, read N- to C-terminus: HTH-type transcriptional regulator FL11 (151 aa).

One can recognise an HTH asnC-type domain in the interval 5 to 66 (LDEIDRRIIK…IVNPEALGYS (62 aa)). The H-T-H motif DNA-binding region spans 24-43 (LREISKITGLAESTIHERIK). 98–104 (ETTGDYD) serves as a coordination point for L-arginine. L-lysine contacts are provided by residues asparagine 118, aspartate 122, and 133–135 (THT). L-arginine contacts are provided by residues aspartate 122 and 133–135 (THT).

As to quaternary structure, homodimer. Binds DNA as a dimer and an octamer.

In the famine mode, FL11 forms dimers and acts as a repressor, leading to growth arrest. In the feast mode, in the presence of high concentrations of lysine or arginine, four dimers assemble into an octamer and cover the fl11 and lysine biosynthesis promoters. This leads to the inhibition of fl11 expression and lysine biosynthesis, decrease of the FL11 concentration in the cell, derepression of the target genes and activation of the metabolism. In terms of biological role, DNA-binding protein involved in the repression of transcription of a large number of genes, thereby arresting growth, in response to environmental changes. The polypeptide is HTH-type transcriptional regulator FL11 (Pyrococcus abyssi (strain GE5 / Orsay)).